The primary structure comprises 328 residues: Beta-ketoacyl-[acyl-carrier-protein] synthase III (328 aa).

Residues Cys122 and His255 contribute to the active site. The ACP-binding stretch occupies residues 256–260 (QANIR). Residue Asn285 is part of the active site.

Belongs to the thiolase-like superfamily. FabH family. As to quaternary structure, homodimer.

It is found in the cytoplasm. It carries out the reaction malonyl-[ACP] + acetyl-CoA + H(+) = 3-oxobutanoyl-[ACP] + CO2 + CoA. Its pathway is lipid metabolism; fatty acid biosynthesis. Its function is as follows. Catalyzes the condensation reaction of fatty acid synthesis by the addition to an acyl acceptor of two carbons from malonyl-ACP. Catalyzes the first condensation reaction which initiates fatty acid synthesis and may therefore play a role in governing the total rate of fatty acid production. Possesses both acetoacetyl-ACP synthase and acetyl transacylase activities. Its substrate specificity determines the biosynthesis of branched-chain and/or straight-chain of fatty acids. The polypeptide is Beta-ketoacyl-[acyl-carrier-protein] synthase III (Polynucleobacter asymbioticus (strain DSM 18221 / CIP 109841 / QLW-P1DMWA-1) (Polynucleobacter necessarius subsp. asymbioticus)).